Here is a 656-residue protein sequence, read N- to C-terminus: CXXC-type zinc finger protein 1 (656 aa).

Methionine 1 carries the post-translational modification N-acetylmethionine. Residues 1–14 (MEGDGSDPEPPDAG) are compositionally biased toward acidic residues. The tract at residues 1–20 (MEGDGSDPEPPDAGEDSKSE) is disordered. Residues serine 6 and serine 19 each carry the phosphoserine modification. The PHD-type zinc-finger motif lies at 28–76 (YCICRKPDINCFMIGCDNCNEWFHGDCIRITEKMAKAIREWYCRECREK). A disordered region spans residues 84-162 (YRHKKSRERD…QHHQQQQQQI (79 aa)). Over residues 90-120 (RERDGNERDSSEPRDEGGGRKRPVPDPDLQR) the composition is skewed to basic and acidic residues. Serine 124 bears the Phosphoserine mark. The CXXC-type zinc-finger motif lies at 160-209 (QQIKRSARMCGECEACRRTEDCGHCDFCRDMKKFGGPNKIRQKCRLRQCQ). The Zn(2+) site is built by cysteine 169, cysteine 172, cysteine 175, cysteine 181, cysteine 184, cysteine 187, cysteine 203, and cysteine 208. Disordered regions lie at residues 219–287 (FPSS…LPLD) and 311–373 (EESP…ASLP). Serine 224 carries the post-translational modification Phosphoserine. Threonine 227 carries the phosphothreonine modification. A compositionally biased stretch (low complexity) spans 239-249 (LPTQQQPQPSQ). A Glycyl lysine isopeptide (Lys-Gly) (interchain with G-Cter in SUMO2) cross-link involves residue lysine 250. Positions 321–334 (RKRAVKVKHVKRRE) are enriched in basic residues. A compositionally biased stretch (basic and acidic residues) spans 335–345 (KKSEKKKEERY). Positions 346-358 (KRHRQKQKHKDKW) are enriched in basic residues. A compositionally biased stretch (basic and acidic residues) spans 359-368 (KHPERADAKD). Residues 422–474 (AEEHGKKLLERIRREQQSARTRLQEMERRFHELEAIILRAKQQAVREDEESNE) adopt a coiled-coil conformation.

As to quaternary structure, component of the SET1 complex, at least composed of the catalytic subunit (SETD1A or SETD1B), WDR5, WDR82, RBBP5, ASH2L/ASH2, CXXC1/CFP1 HCFC1 and DPY30. Interacts with SETD1A. Interacts with ZNF335. Interacts with PRDM9; this interaction does not link PRDM9-activated recombination hotspot sites with DSB machinery and is not required for the hotspot recognition pathway. Interacts with histone H3K4me3. In terms of processing, may be regulated by proteolysis. As to expression, ubiquitous.

The protein resides in the nucleus speckle. The protein localises to the nucleus. Functionally, transcriptional activator that exhibits a unique DNA binding specificity for CpG unmethylated motifs with a preference for CpGG. This is CXXC-type zinc finger protein 1 (CXXC1) from Homo sapiens (Human).